The primary structure comprises 199 residues: Glycerol-3-phosphate acyltransferase (199 aa).

The next 4 helical transmembrane spans lie at 2–22 (LEVL…GILV), 77–97 (PWVL…PVFL), 113–133 (IALA…VALA), and 139–159 (LAAM…GQPL).

Belongs to the PlsY family. In terms of assembly, probably interacts with PlsX.

The protein resides in the cell membrane. The enzyme catalyses an acyl phosphate + sn-glycerol 3-phosphate = a 1-acyl-sn-glycero-3-phosphate + phosphate. It participates in lipid metabolism; phospholipid metabolism. Functionally, catalyzes the transfer of an acyl group from acyl-phosphate (acyl-PO(4)) to glycerol-3-phosphate (G3P) to form lysophosphatidic acid (LPA). This enzyme utilizes acyl-phosphate as fatty acyl donor, but not acyl-CoA or acyl-ACP. The protein is Glycerol-3-phosphate acyltransferase of Rubrobacter xylanophilus (strain DSM 9941 / JCM 11954 / NBRC 16129 / PRD-1).